The chain runs to 104 residues: Complex III assembly factor LYRM7 (104 aa).

S60 carries the phosphoserine modification.

It belongs to the complex I LYR family. In terms of assembly, interacts with UQCRFS1.

The protein resides in the mitochondrion matrix. Its function is as follows. Assembly factor required for Rieske Fe-S protein UQCRFS1 incorporation into the cytochrome b-c1 (CIII) complex. Functions as a chaperone, binding to this subunit within the mitochondrial matrix and stabilizing it prior to its translocation and insertion into the late CIII dimeric intermediate within the mitochondrial inner membrane. The protein is Complex III assembly factor LYRM7 (Lyrm7) of Rattus norvegicus (Rat).